We begin with the raw amino-acid sequence, 273 residues long: Shikimate dehydrogenase (NADP(+)) (273 aa).

Shikimate is bound by residues Ser14–Ser16 and Thr61. The active-site Proton acceptor is Lys65. 2 residues coordinate shikimate: Asn86 and Asp102. NADP(+)-binding positions include Gly126–Ala130, Asn150–Lys155, and Met213. Tyr215 lines the shikimate pocket. Gly237 contacts NADP(+).

This sequence belongs to the shikimate dehydrogenase family. Homodimer.

It catalyses the reaction shikimate + NADP(+) = 3-dehydroshikimate + NADPH + H(+). The protein operates within metabolic intermediate biosynthesis; chorismate biosynthesis; chorismate from D-erythrose 4-phosphate and phosphoenolpyruvate: step 4/7. Functionally, involved in the biosynthesis of the chorismate, which leads to the biosynthesis of aromatic amino acids. Catalyzes the reversible NADPH linked reduction of 3-dehydroshikimate (DHSA) to yield shikimate (SA). This is Shikimate dehydrogenase (NADP(+)) from Tolumonas auensis (strain DSM 9187 / NBRC 110442 / TA 4).